The chain runs to 564 residues: Proline--tRNA ligase (564 aa).

Belongs to the class-II aminoacyl-tRNA synthetase family. ProS type 1 subfamily. In terms of assembly, homodimer.

Its subcellular location is the cytoplasm. It carries out the reaction tRNA(Pro) + L-proline + ATP = L-prolyl-tRNA(Pro) + AMP + diphosphate. Its function is as follows. Catalyzes the attachment of proline to tRNA(Pro) in a two-step reaction: proline is first activated by ATP to form Pro-AMP and then transferred to the acceptor end of tRNA(Pro). As ProRS can inadvertently accommodate and process non-cognate amino acids such as alanine and cysteine, to avoid such errors it has two additional distinct editing activities against alanine. One activity is designated as 'pretransfer' editing and involves the tRNA(Pro)-independent hydrolysis of activated Ala-AMP. The other activity is designated 'posttransfer' editing and involves deacylation of mischarged Ala-tRNA(Pro). The misacylated Cys-tRNA(Pro) is not edited by ProRS. The protein is Proline--tRNA ligase of Bacillus subtilis (strain 168).